The chain runs to 170 residues: Lipoprotein signal peptidase (170 aa).

3 consecutive transmembrane segments (helical) span residues 9 to 29, 72 to 92, and 95 to 117; these read FNIF…KYLV, IFFI…ALKE, and CITR…DRLF. Catalysis depends on residues aspartate 124 and aspartate 146. The chain crosses the membrane as a helical span at residues 143–163; it reads NFADSYVVIGMILFLVYDFFI.

This sequence belongs to the peptidase A8 family.

The protein resides in the cell inner membrane. The enzyme catalyses Release of signal peptides from bacterial membrane prolipoproteins. Hydrolyzes -Xaa-Yaa-Zaa-|-(S,diacylglyceryl)Cys-, in which Xaa is hydrophobic (preferably Leu), and Yaa (Ala or Ser) and Zaa (Gly or Ala) have small, neutral side chains.. The protein operates within protein modification; lipoprotein biosynthesis (signal peptide cleavage). Its function is as follows. This protein specifically catalyzes the removal of signal peptides from prolipoproteins. The sequence is that of Lipoprotein signal peptidase from Borrelia garinii subsp. bavariensis (strain ATCC BAA-2496 / DSM 23469 / PBi) (Borreliella bavariensis).